Consider the following 515-residue polypeptide: Bifunctional purine biosynthesis protein PurH (515 aa).

An MGS-like domain is found at 1–145; the sequence is MTKRVLISVS…KNHASVTVVV (145 aa).

Belongs to the PurH family.

It catalyses the reaction (6R)-10-formyltetrahydrofolate + 5-amino-1-(5-phospho-beta-D-ribosyl)imidazole-4-carboxamide = 5-formamido-1-(5-phospho-D-ribosyl)imidazole-4-carboxamide + (6S)-5,6,7,8-tetrahydrofolate. The catalysed reaction is IMP + H2O = 5-formamido-1-(5-phospho-D-ribosyl)imidazole-4-carboxamide. Its pathway is purine metabolism; IMP biosynthesis via de novo pathway; 5-formamido-1-(5-phospho-D-ribosyl)imidazole-4-carboxamide from 5-amino-1-(5-phospho-D-ribosyl)imidazole-4-carboxamide (10-formyl THF route): step 1/1. It functions in the pathway purine metabolism; IMP biosynthesis via de novo pathway; IMP from 5-formamido-1-(5-phospho-D-ribosyl)imidazole-4-carboxamide: step 1/1. The sequence is that of Bifunctional purine biosynthesis protein PurH from Streptococcus pneumoniae (strain 70585).